The primary structure comprises 369 residues: Variable large protein 7 (369 aa).

The N-terminal stretch at 1–26 (MRKRISAIINKLNISIIIMTVVLMIG) is a signal peptide. The N-palmitoyl cysteine moiety is linked to residue C27. The S-diacylglycerol cysteine moiety is linked to residue C27.

The protein belongs to the variable large protein (Vlp) family. Alpha subfamily.

Its subcellular location is the cell outer membrane. The Vlp and Vsp proteins are antigenically distinct proteins, only one vlp or vsp gene is transcriptionally active at any one time. Switching between these genes is a mechanism of host immune response evasion. The protein is Variable large protein 7 of Borrelia hermsii.